A 141-amino-acid polypeptide reads, in one-letter code: MADLRLLLGFDYGSKQIGVAVGQVITGQARELCTLKAQNGVPDWAQVEKLIAEWKPDAIVVGLPLNMDGTPSEMSARAEKFARRLNGRFNLPVHTHDERLTTFEAKGERMARGGQRGSYRDNPVDAIAAALLLQGWLEANT.

This sequence belongs to the YqgF nuclease family.

The protein localises to the cytoplasm. Could be a nuclease involved in processing of the 5'-end of pre-16S rRNA. The sequence is that of Putative pre-16S rRNA nuclease from Pseudomonas putida (strain ATCC 47054 / DSM 6125 / CFBP 8728 / NCIMB 11950 / KT2440).